The chain runs to 684 residues: Methionine--tRNA ligase (684 aa).

The 'HIGH' region signature appears at 17 to 27 (PYANGKAHVGH). Residues Cys148, Cys151, Cys160, and Cys164 each contribute to the Zn(2+) site. Residues 330 to 334 (TFSKS) carry the 'KMSKS' region motif. An ATP-binding site is contributed by Lys333. The tRNA-binding domain occupies 582 to 684 (DFSKLDIRIG…KETNPGTCIH (103 aa)).

This sequence belongs to the class-I aminoacyl-tRNA synthetase family. MetG type 1 subfamily. Homodimer. It depends on Zn(2+) as a cofactor.

The protein localises to the cytoplasm. It carries out the reaction tRNA(Met) + L-methionine + ATP = L-methionyl-tRNA(Met) + AMP + diphosphate. Functionally, is required not only for elongation of protein synthesis but also for the initiation of all mRNA translation through initiator tRNA(fMet) aminoacylation. The protein is Methionine--tRNA ligase of Methanococcoides burtonii (strain DSM 6242 / NBRC 107633 / OCM 468 / ACE-M).